The following is a 238-amino-acid chain: Purine nucleoside phosphorylase DeoD-type (238 aa).

His4 lines the a purine D-ribonucleoside pocket. Residues Gly20, Arg24, Arg43, and Arg87 to Ser90 contribute to the phosphate site. A purine D-ribonucleoside-binding positions include Glu181–Glu183 and Ser205–Asp206. Asp206 (proton donor) is an active-site residue.

Belongs to the PNP/UDP phosphorylase family. Homohexamer; trimer of homodimers.

It catalyses the reaction a purine D-ribonucleoside + phosphate = a purine nucleobase + alpha-D-ribose 1-phosphate. It carries out the reaction a purine 2'-deoxy-D-ribonucleoside + phosphate = a purine nucleobase + 2-deoxy-alpha-D-ribose 1-phosphate. In terms of biological role, catalyzes the reversible phosphorolytic breakdown of the N-glycosidic bond in the beta-(deoxy)ribonucleoside molecules, with the formation of the corresponding free purine bases and pentose-1-phosphate. This Mycoplasma pneumoniae (strain ATCC 29342 / M129 / Subtype 1) (Mycoplasmoides pneumoniae) protein is Purine nucleoside phosphorylase DeoD-type.